Consider the following 253-residue polypeptide: Blue-light photoreceptor (253 aa).

Residues 6–79 (KFDVILKALN…AKIRHAINEK (74 aa)) enclose the PAS domain. An S-4a-FMN cysteine modification is found at C56. Positions 80–133 (STANVLLKNYRKNGTSFMNELTIEPIYDDNDHLYFVGIQKDVTTEHNYQLELEK) constitute a PAC domain. One can recognise an STAS domain in the interval 142–253 (STPIVPIKEN…STIKEALQFY (112 aa)).

Post-translationally, FMN binds covalently to cysteine after exposure to blue light and this bond is spontaneously broken in the dark.

Functionally, exhibits the same spectroscopical features and blue-light induced photochemistry as plants phototropins, with the reversible formation of a blue-shifted photoproduct, assigned to an FMN-cysteine thiol adduct. Positive regulator in the activation of the general stress transcription factor sigma-B. The polypeptide is Blue-light photoreceptor (Listeria innocua serovar 6a (strain ATCC BAA-680 / CLIP 11262)).